Reading from the N-terminus, the 776-residue chain is Methionine--tRNA ligase (776 aa).

The short motif at Pro10–His20 is the 'HIGH' region element. Zn(2+) contacts are provided by Cys143, Cys146, Cys156, and Cys159. A 'KMSKS' region motif is present at residues Lys375 to Ser379. Lys378 contacts ATP. One can recognise a tRNA-binding domain in the interval Asp676–Arg776.

The protein belongs to the class-I aminoacyl-tRNA synthetase family. MetG type 1 subfamily. As to quaternary structure, homodimer. The cofactor is Zn(2+).

The protein resides in the cytoplasm. The catalysed reaction is tRNA(Met) + L-methionine + ATP = L-methionyl-tRNA(Met) + AMP + diphosphate. Is required not only for elongation of protein synthesis but also for the initiation of all mRNA translation through initiator tRNA(fMet) aminoacylation. This is Methionine--tRNA ligase (metG) from Nanoarchaeum equitans (strain Kin4-M).